The sequence spans 112 residues: Small ribosomal subunit protein bS16 (112 aa).

This sequence belongs to the bacterial ribosomal protein bS16 family.

This chain is Small ribosomal subunit protein bS16, found in Aquifex aeolicus (strain VF5).